The primary structure comprises 241 residues: Agamous-like MADS-box protein AGL9 homolog (241 aa).

An MADS-box domain is found at 3-57 (RGRVELKRIENKINRQVTFAKRRNGLLKKAYELSVLCDAEVALIIFSNRGKLYEF). The K-box domain occupies 89 to 179 (EISSQQEYLK…KQRLMEGSTL (91 aa)).

The protein resides in the nucleus. Functionally, probable transcription factor. The polypeptide is Agamous-like MADS-box protein AGL9 homolog (FBP2) (Petunia hybrida (Petunia)).